The following is a 252-amino-acid chain: Chitooligosaccharide deacetylase (252 aa).

Mg(2+)-binding residues include His-61 and His-125.

The protein belongs to the YdjC deacetylase family. ChbG subfamily. In terms of assembly, homodimer. Mg(2+) serves as cofactor.

It is found in the cytoplasm. It catalyses the reaction N,N'-diacetylchitobiose + H2O = N-acetyl-beta-D-glucosaminyl-(1-&gt;4)-D-glucosamine + acetate. It carries out the reaction diacetylchitobiose-6'-phosphate + H2O = N'-monoacetylchitobiose-6'-phosphate + acetate. Its pathway is glycan degradation; chitin degradation. Functionally, involved in the degradation of chitin. ChbG is essential for growth on the acetylated chitooligosaccharides chitobiose and chitotriose but is dispensable for growth on cellobiose and chitosan dimer, the deacetylated form of chitobiose. Deacetylation of chitobiose-6-P and chitotriose-6-P is necessary for both the activation of the chb promoter by the regulatory protein ChbR and the hydrolysis of phosphorylated beta-glucosides by the phospho-beta-glucosidase ChbF. Catalyzes the removal of only one acetyl group from chitobiose-6-P to yield monoacetylchitobiose-6-P, the inducer of ChbR and the substrate of ChbF. This Escherichia coli O127:H6 (strain E2348/69 / EPEC) protein is Chitooligosaccharide deacetylase.